The sequence spans 573 residues: Potassium-transporting ATPase potassium-binding subunit (573 aa).

10 consecutive transmembrane segments (helical) span residues Ile-6–Ile-26, Phe-66–Leu-86, Ala-135–Ile-155, Ile-177–Val-197, Ile-257–Val-277, Gly-283–Ile-303, Ile-382–Phe-402, Met-428–Ile-448, Ile-493–Leu-513, and Phe-537–Pro-557.

This sequence belongs to the KdpA family. In terms of assembly, the system is composed of three essential subunits: KdpA, KdpB and KdpC.

Its subcellular location is the cell inner membrane. Its function is as follows. Part of the high-affinity ATP-driven potassium transport (or Kdp) system, which catalyzes the hydrolysis of ATP coupled with the electrogenic transport of potassium into the cytoplasm. This subunit binds the periplasmic potassium ions and delivers the ions to the membrane domain of KdpB through an intramembrane tunnel. The sequence is that of Potassium-transporting ATPase potassium-binding subunit from Francisella tularensis subsp. novicida (strain U112).